The following is a 268-amino-acid chain: Mitochondrial distribution and morphology protein 12 (268 aa).

Positions 1-256 (MSFEINWQDL…WPSWINLDFN (256 aa)) constitute an SMP-LTD domain. A disordered region spans residues 75 to 94 (LPKDKIPEESDSGCQSADGE).

Belongs to the MDM12 family. As to quaternary structure, component of the ER-mitochondria encounter structure (ERMES) or MDM complex, composed of MMM1, MDM10, MDM12 and MDM34. An MMM1 homodimer associates with one molecule of MDM12 on each side in a pairwise head-to-tail manner, and the SMP-LTD domains of MMM1 and MDM12 generate a continuous hydrophobic tunnel for phospholipid trafficking.

It localises to the mitochondrion outer membrane. Its subcellular location is the endoplasmic reticulum membrane. In terms of biological role, component of the ERMES/MDM complex, which serves as a molecular tether to connect the endoplasmic reticulum (ER) and mitochondria. Components of this complex are involved in the control of mitochondrial shape and protein biogenesis, and function in nonvesicular lipid trafficking between the ER and mitochondria. MDM12 is required for the interaction of the ER-resident membrane protein MMM1 and the outer mitochondrial membrane-resident beta-barrel protein MDM10. The MDM12-MMM1 subcomplex functions in the major beta-barrel assembly pathway that is responsible for biogenesis of all mitochondrial outer membrane beta-barrel proteins, and acts in a late step after the SAM complex. The MDM10-MDM12-MMM1 subcomplex further acts in the TOM40-specific pathway after the action of the MDM12-MMM1 complex. Essential for establishing and maintaining the structure of mitochondria and maintenance of mtDNA nucleoids. This is Mitochondrial distribution and morphology protein 12 from Lachancea thermotolerans (strain ATCC 56472 / CBS 6340 / NRRL Y-8284) (Yeast).